Consider the following 346-residue polypeptide: Very-long-chain 3-oxoacyl-CoA reductase (346 aa).

Residues Ser-26–Val-46 traverse the membrane as a helical segment. 8 residues coordinate NADP(+): Val-71, Asp-126, Asp-134, Asn-153, Tyr-220, Lys-224, Ile-253, and Ser-255. Tyr-220 (proton donor) is an active-site residue. Lys-224 (lowers pKa of active site Tyr) is an active-site residue.

It belongs to the short-chain dehydrogenases/reductases (SDR) family.

It is found in the endoplasmic reticulum membrane. It carries out the reaction a very-long-chain (3R)-3-hydroxyacyl-CoA + NADP(+) = a very-long-chain 3-oxoacyl-CoA + NADPH + H(+). It functions in the pathway lipid metabolism; fatty acid biosynthesis. In terms of biological role, component of the microsomal membrane bound fatty acid elongation system, which produces the 26-carbon very long-chain fatty acids (VLCFA) from palmitate. Catalyzes the reduction of the 3-ketoacyl-CoA intermediate that is formed in each cycle of fatty acid elongation. VLCFAs serve as precursors for ceramide and sphingolipids. The chain is Very-long-chain 3-oxoacyl-CoA reductase from Aspergillus oryzae (strain ATCC 42149 / RIB 40) (Yellow koji mold).